Reading from the N-terminus, the 381-residue chain is S-(hydroxymethyl)glutathione dehydrogenase (381 aa).

Cys49 is a binding site for Zn(2+). Residue His50 participates in NAD(+) binding. The Zn(2+) site is built by His71, Glu72, Cys101, Cys104, Cys107, Cys115, and Cys178. NAD(+) contacts are provided by residues 203 to 208 (GGGIVG), Asp227, and 298 to 300 (IGV).

It belongs to the zinc-containing alcohol dehydrogenase family. Class-III subfamily. It depends on Zn(2+) as a cofactor.

The catalysed reaction is a primary alcohol + NAD(+) = an aldehyde + NADH + H(+). The enzyme catalyses a secondary alcohol + NAD(+) = a ketone + NADH + H(+). It carries out the reaction S-(hydroxymethyl)glutathione + NADP(+) = S-formylglutathione + NADPH + H(+). It catalyses the reaction S-(hydroxymethyl)glutathione + NAD(+) = S-formylglutathione + NADH + H(+). The catalysed reaction is S-nitrosoglutathione + NADH + H(+) = S-(hydroxysulfenamide)glutathione + NAD(+). Functionally, oxidizes long-chain alcohols and, in the presence of glutathione, is able to oxidize formaldehyde. Also acts as a S-nitroso-glutathione reductase by catalyzing the NADH-dependent reduction of S-nitrosoglutathione, thereby regulating protein S-nitrosylation. The protein is S-(hydroxymethyl)glutathione dehydrogenase (FDH1) of Candida maltosa (Yeast).